The following is a 341-amino-acid chain: MKKMMIATLAAASVLLAVANQAHAGATLDAVQKKGFVQCGISDGLPGFSYADADGKFSGIDVDVCRGVAAAVFGDDTKVKYTPLTAKERFTALQSGEVDLLSRNTTWTSSRDAGMGMAFTGVTYYDGIGFLTHDKAGLKSAKELDGATVCIQAGTDTELNVADYFKANNMKYTPVTFDRSDESAKALESGRCDTLASDQSQLYALRIKLSNPAEWIVLPEVISKEPLGPVVRRGDDEWFSIVRWTLFAMLNAEEMGINSQNVDEKAANPATPDMAHLLGKEGDYGKDLKLDNKWAYNIIKQVGNYSEIFERNVGSESPLKIKRGQNNLWNNGGIQYAPPVR.

An N-terminal signal peptide occupies residues Met1 to Ala19.

This sequence belongs to the bacterial solute-binding protein 3 family.

The protein localises to the periplasm. Its function is as follows. Probably part of the binding-protein-dependent transport system YdhWXYZ for an amino acid. This is Putative amino-acid ABC transporter-binding protein YhdW (yhdW) from Escherichia coli O157:H7.